The sequence spans 329 residues: Urease accessory protein UreD 2 (329 aa).

Positions Tyr-100–Thr-120 are disordered. Residues Pro-103 to Thr-120 are compositionally biased toward polar residues.

Belongs to the UreD family. In terms of assembly, ureD, UreF and UreG form a complex that acts as a GTP-hydrolysis-dependent molecular chaperone, activating the urease apoprotein by helping to assemble the nickel containing metallocenter of UreC. The UreE protein probably delivers the nickel.

Its subcellular location is the cytoplasm. Functionally, required for maturation of urease via the functional incorporation of the urease nickel metallocenter. The polypeptide is Urease accessory protein UreD 2 (Psychrobacter cryohalolentis (strain ATCC BAA-1226 / DSM 17306 / VKM B-2378 / K5)).